The sequence spans 99 residues: uncharacterized protein (99 aa).

This is an uncharacterized protein from Dictyostelium discoideum (Social amoeba).